A 76-amino-acid chain; its full sequence is Esculentin-2-ALb (76 aa).

The first 22 residues, 1–22, serve as a signal peptide directing secretion; that stretch reads MFTMKKSLLLLFFLGTISLSLC. Residues 23–39 constitute a propeptide that is removed on maturation; sequence EEERSADEDDGEKGVKR. A disulfide bond links Cys70 and Cys76.

In terms of tissue distribution, expressed by the skin glands.

Its subcellular location is the secreted. In terms of biological role, antimicrobial peptide with activity against Gram-positive and Gram-negative bacteria and against fungi. Has been tested against S.aureus (MIC=1.25 ug/mL), B.pumilus (MIC=2.5 ug/mL), B.cereus (MIC=7.5 ug/mL), E.coli (MIC=12.5 ug/mL), B.dysenteriae (MIC=7.5 ug/mL), A.cacoaceticus (MIC=12.5 ug/mL), P.aeruginosa (MIC=50.0 ug/mL) and C.albicans (MIC=2.5 ug/mL). Also shows a weak hemolytic activity. This Amolops loloensis (Lolokou Sucker Frog) protein is Esculentin-2-ALb.